The primary structure comprises 167 residues: Ubiquitin-fold modifier-conjugating enzyme 1 (167 aa).

Cysteine 116 acts as the Glycyl thioester intermediate in catalysis. Lysine 122 participates in a covalent cross-link: Glycyl lysine isopeptide (Lys-Gly) (interchain with G-Cter in UFM1).

It belongs to the ubiquitin-conjugating enzyme family. UFC1 subfamily. Interacts with UBA5 (via C-terminus). Interacts with UFL1. Interacts with UFM1. Interacts with KIRREL3. Ufmylated at Lys-122. Deufmylated by UFSP1.

In terms of biological role, E2-like enzyme which specifically catalyzes the second step in ufmylation. Accepts the ubiquitin-like modifier UFM1 from the E1 enzyme UBA5 and forms an intermediate with UFM1 via a thioester linkage. Ufmylation is involved in various processes, such as ribosome recycling, response to DNA damage, interferon response or reticulophagy (also called ER-phagy). This is Ubiquitin-fold modifier-conjugating enzyme 1 from Mus musculus (Mouse).